Here is a 292-residue protein sequence, read N- to C-terminus: Fat storage-inducing transmembrane protein 1 (292 aa).

At Met1–Arg18 the chain is on the lumenal side. Residues Ala19–Gly39 traverse the membrane as a helical segment. The Cytoplasmic portion of the chain corresponds to Ser40–Arg54. Residues Leu55–Asn75 form a helical membrane-spanning segment. The Lumenal portion of the chain corresponds to Pro76 to Ser94. A helical membrane pass occupies residues Ala95–Thr115. Over Arg116–Ala141 the chain is Cytoplasmic. A helical transmembrane segment spans residues Phe142–Leu162. Residues His163–Thr187 lie on the Lumenal side of the membrane. Residue His186 is part of the active site. Residues Phe188 to Leu208 form a helical membrane-spanning segment. The Cytoplasmic segment spans residues Ala209–Leu220. A helical membrane pass occupies residues Val221 to Ile241. Over Tyr242 to Lys249 the chain is Lumenal. His244 is an active-site residue. A helical membrane pass occupies residues Val250–Gln270. Topologically, residues Pro271 to Asn292 are cytoplasmic.

This sequence belongs to the FIT family. FIT1 subfamily.

It is found in the endoplasmic reticulum membrane. Functionally, plays an important role in the formation of lipid droplets (LDs) which are storage organelles at the center of lipid and energy homeostasis. Directly binds to diacylglycerol (DAGs) and triacylglycerol. This is Fat storage-inducing transmembrane protein 1 from Bos taurus (Bovine).